The primary structure comprises 272 residues: 3-methyl-2-oxobutanoate hydroxymethyltransferase (272 aa).

D43 and D82 together coordinate Mg(2+). 3-methyl-2-oxobutanoate-binding positions include 43–44 (DS), D82, and K112. Residue E114 participates in Mg(2+) binding. Catalysis depends on E179, which acts as the Proton acceptor.

It belongs to the PanB family. Homodecamer; pentamer of dimers. The cofactor is Mg(2+).

The protein localises to the cytoplasm. It carries out the reaction 3-methyl-2-oxobutanoate + (6R)-5,10-methylene-5,6,7,8-tetrahydrofolate + H2O = 2-dehydropantoate + (6S)-5,6,7,8-tetrahydrofolate. It participates in cofactor biosynthesis; (R)-pantothenate biosynthesis; (R)-pantoate from 3-methyl-2-oxobutanoate: step 1/2. Its function is as follows. Catalyzes the reversible reaction in which hydroxymethyl group from 5,10-methylenetetrahydrofolate is transferred onto alpha-ketoisovalerate to form ketopantoate. The chain is 3-methyl-2-oxobutanoate hydroxymethyltransferase from Staphylococcus aureus (strain MRSA252).